The primary structure comprises 277 residues: MKKEEKINYFWKYVLLTVGGILILIPLMVTVFSSFKKTKDIMNHFFAFPNPITLDNYKRLLADGVGGYFWNSTVITVLSVLVVMLFIPAAAYSIARNMSRRKAFNIMYSLLILGIFVPFQVIMIPITVMMSKLGLANMWGLIILYLTYAIPQTLFLYVGYIKLSVPDSLDEAAEIDGADKLTTYRKIIFPMLKPMHATTLIINALWFWNDFMLPLLILNKDSSMWTLPLFQYNYSGQYFNDYGPSFASYIVGIITITIVYLIFQKHIIAGMSNGAVK.

Helical transmembrane passes span 13 to 33 (YVLL…TVFS), 74 to 94 (VITV…AYSI), 110 to 130 (LLIL…TVMM), 141 to 161 (LIIL…VGYI), 198 to 218 (TTLI…LLIL), and 243 to 263 (GPSF…YLIF). One can recognise an ABC transmembrane type-1 domain in the interval 69 to 263 (FWNSTVITVL…ITITIVYLIF (195 aa)).

The protein belongs to the binding-protein-dependent transport system permease family. MalFG subfamily.

Its subcellular location is the cell membrane. Involved in a binding protein-dependent transport system responsible for the uptake of melibiose, raffinose and isomaltotriose. In Streptococcus mutans serotype c (strain ATCC 700610 / UA159), this protein is Multiple sugar-binding transport system permease protein MsmG (msmG).